The sequence spans 211 residues: Pyridoxine/pyridoxamine 5'-phosphate oxidase (211 aa).

Residues 7–10 and K65 each bind substrate; that span reads RREY. Residues 60–65, 75–76, R81, K82, and Q104 contribute to the FMN site; these read RIVLLK and YT. Positions 122, 126, and 130 each coordinate substrate. FMN contacts are provided by residues 139–140 and W184; that span reads QS. 190–192 contacts substrate; it reads RLH. Residue R194 participates in FMN binding.

Belongs to the pyridoxamine 5'-phosphate oxidase family. In terms of assembly, homodimer. It depends on FMN as a cofactor.

It carries out the reaction pyridoxamine 5'-phosphate + O2 + H2O = pyridoxal 5'-phosphate + H2O2 + NH4(+). The catalysed reaction is pyridoxine 5'-phosphate + O2 = pyridoxal 5'-phosphate + H2O2. Its pathway is cofactor metabolism; pyridoxal 5'-phosphate salvage; pyridoxal 5'-phosphate from pyridoxamine 5'-phosphate: step 1/1. It participates in cofactor metabolism; pyridoxal 5'-phosphate salvage; pyridoxal 5'-phosphate from pyridoxine 5'-phosphate: step 1/1. Functionally, catalyzes the oxidation of either pyridoxine 5'-phosphate (PNP) or pyridoxamine 5'-phosphate (PMP) into pyridoxal 5'-phosphate (PLP). This Vibrio parahaemolyticus serotype O3:K6 (strain RIMD 2210633) protein is Pyridoxine/pyridoxamine 5'-phosphate oxidase.